The chain runs to 657 residues: Zinc transporter ZIP4 (657 aa).

The signal sequence occupies residues M1 to M22. Topologically, residues V23–Y335 are extracellular. N193, N220, and N268 each carry an N-linked (GlcNAc...) asparagine glycan. A helical membrane pass occupies residues L336–L356. The Cytoplasmic segment spans residues T357–S374. A helical membrane pass occupies residues L375–L395. Residues H396 to R417 lie on the Extracellular side of the membrane. The chain crosses the membrane as a helical span at residues L418–L438. The Cytoplasmic portion of the chain corresponds to L439–Y508. The Essential for SLC39A4 endocytosis motif lies at L462–L464. A disordered region spans residues S467–L491. A helical transmembrane segment spans residues L509–A528. 3 residues coordinate Zn(2+): H517, N518, and D521. The Extracellular segment spans residues F529–G536. The chain crosses the membrane as a helical span at residues L537–L563. Positions 546, 547, and 550 each coordinate Zn(2+). The Cytoplasmic portion of the chain corresponds to T564–A568. A helical membrane pass occupies residues L569–V589. Residues G590–T597 lie on the Extracellular side of the membrane. Residues W598–A618 form a helical membrane-spanning segment. Topologically, residues M619–P627 are cytoplasmic. A helical membrane pass occupies residues W628–L648. Topologically, residues S649–F657 are extracellular.

It belongs to the ZIP transporter (TC 2.A.5) family. In terms of assembly, homodimer; homodimerization is mediated by the transmembrane domain. Post-translationally, the extracellular N-terminal ectodomain is cleaved when cells are Zn(2+) deficient, N-terminally cleaved SLC39A4 is internalized at a faster rate. Under excess Zn(2+) conditions, SLC39A4 on the cell surface is rapidly endocytosed, ubiquitinated and degraded. In terms of processing, glycosylated. Expressed in duodenum, jejunum, and ileum.

Its subcellular location is the cell membrane. It is found in the recycling endosome membrane. The protein localises to the apical cell membrane. The enzyme catalyses Zn(2+)(in) = Zn(2+)(out). Its function is as follows. Selective transporter that mediates the uptake of Zn(2+). Plays an essential role for dietary zinc uptake from small intestine. The Zn(2+) uniporter activity is regulated by zinc availability. Also exhibits polyspecific binding and transport of Cu(2+), Cd(2+) and possibly Ni(2+) but at higher concentrations. This chain is Zinc transporter ZIP4 (Slc39a4), found in Rattus norvegicus (Rat).